Consider the following 52-residue polypeptide: Conotoxin-like peptide 2 (52 aa).

The N-terminal stretch at 1–18 (MKFSTILLLVCPTVALSA) is a signal peptide. Disulfide bonds link Cys24–Cys38, Cys31–Cys42, and Cys37–Cys49.

It localises to the secreted. The chain is Conotoxin-like peptide 2 (CTL-2) from Orgyia pseudotsugata (Douglas-fir tussock moth).